A 404-amino-acid chain; its full sequence is Exodeoxyribonuclease 7 large subunit (404 aa).

It belongs to the XseA family. As to quaternary structure, heterooligomer composed of large and small subunits.

It localises to the cytoplasm. The enzyme catalyses Exonucleolytic cleavage in either 5'- to 3'- or 3'- to 5'-direction to yield nucleoside 5'-phosphates.. Functionally, bidirectionally degrades single-stranded DNA into large acid-insoluble oligonucleotides, which are then degraded further into small acid-soluble oligonucleotides. This chain is Exodeoxyribonuclease 7 large subunit, found in Ruminiclostridium cellulolyticum (strain ATCC 35319 / DSM 5812 / JCM 6584 / H10) (Clostridium cellulolyticum).